Here is a 345-residue protein sequence, read N- to C-terminus: Trace amine-associated receptor 6 (345 aa).

Residues Met1 to Arg32 lie on the Extracellular side of the membrane. N-linked (GlcNAc...) asparagine glycans are attached at residues Asn4 and Asn19. 2 cysteine pairs are disulfide-bonded: Cys22–Cys186 and Cys105–Cys190. The helical transmembrane segment at Val33–Val53 threads the bilayer. The Cytoplasmic segment spans residues Met54 to Asn68. The chain crosses the membrane as a helical span at residues Phe69–Ser89. The Extracellular segment spans residues Met90 to Phe107. Residues His108–Ile128 form a helical membrane-spanning segment. Over Asp129 to Ser147 the chain is Cytoplasmic. A helical transmembrane segment spans residues Val148–Phe168. At Tyr169 to Asp202 the chain is on the extracellular side. Residues Cys203–Val223 form a helical membrane-spanning segment. The Cytoplasmic portion of the chain corresponds to Ala224–Thr259. The helical transmembrane segment at Leu260–Ile276 threads the bilayer. Residues Asp277–Ala282 are Extracellular-facing. Residues Phe283–Tyr302 traverse the membrane as a helical segment. At Asn303–Ile345 the chain is on the cytoplasmic side.

Belongs to the G-protein coupled receptor 1 family.

It is found in the cell membrane. Olfactory receptor specific for trace amines, such as beta-phenylethylamine (beta-PEA). Trace amine compounds are enriched in animal body fluids and act on trace amine-associated receptors (TAARs) to elicit both intraspecific and interspecific innate behaviors. Beta-PEA-binding causes a conformation change that triggers signaling via G(s)-class of G alpha proteins (GNAL or GNAS). The protein is Trace amine-associated receptor 6 (TAAR6) of Pan troglodytes (Chimpanzee).